The primary structure comprises 622 residues: WD repeat-containing protein 70 (622 aa).

The span at 36–55 (RTAVERSKQTLEAREKEEQL) shows a compositional bias: basic and acidic residues. The segment at 36-141 (RTAVERSKQT…DNPVKDIPDS (106 aa)) is disordered. The span at 67–84 (SSSGQKKTKASGSSSGSE) shows a compositional bias: low complexity. Positions 120-132 (SDDEDDEEHEDDD) are enriched in acidic residues. 7 WD repeats span residues 148-187 (HGTKTVSALGLDPSGARLVTGGYDYDVRFWDFAGMDASLQ), 195-236 (CECH…ECVK), 249-289 (GHTA…KHKG), 298-337 (GKPVIPTCCTYSRDGKFIAAGCQDGSIQIWDRNMSVHTKF), 344-383 (TPGTDTSCVTFSYGGNVLATRGGDDTLKTWDIRKFKNPLN), 387-434 (GLEN…KIYE), and 437-476 (VTEASVVRCLWHPKLNQIMVGTGNGLAKVYYDPNRSQRGA). Over residues 508–533 (REPRQRSTRKQLEKDRLDPVKSHKPE) the composition is skewed to basic and acidic residues. Disordered stretches follow at residues 508-549 (REPR…GTHG) and 602-622 (AEVDSDEEEPDNEPEWKKRKI). A compositionally biased stretch (gly residues) spans 539-549 (PGRGGRVGTHG). A compositionally biased stretch (acidic residues) spans 604–614 (VDSDEEEPDNE).

The protein belongs to the WD repeat GAD-1 family.

This is WD repeat-containing protein 70 (wdr70) from Xenopus laevis (African clawed frog).